A 135-amino-acid chain; its full sequence is Basic phospholipase A2 KBf-VA (135 aa).

Intrachain disulfides connect Cys28-Cys87, Cys42-Cys134, Cys44-Cys60, Cys59-Cys115, Cys66-Cys108, Cys76-Cys101, and Cys94-Cys106. 3 residues coordinate Ca(2+): Tyr43, Gly45, and Gly47. The active site involves His63. Position 64 (Asp64) interacts with Ca(2+). Asp109 is a catalytic residue.

It belongs to the phospholipase A2 family. Group I subfamily. D49 sub-subfamily. Ca(2+) is required as a cofactor. Expressed by the venom gland.

It localises to the secreted. The catalysed reaction is a 1,2-diacyl-sn-glycero-3-phosphocholine + H2O = a 1-acyl-sn-glycero-3-phosphocholine + a fatty acid + H(+). Functionally, snake venom phospholipase A2 (PLA2) that inhibits neuromuscular transmission by blocking acetylcholine release from the nerve termini. PLA2 catalyzes the calcium-dependent hydrolysis of the 2-acyl groups in 3-sn-phosphoglycerides. In Bungarus fasciatus (Banded krait), this protein is Basic phospholipase A2 KBf-VA.